Consider the following 88-residue polypeptide: MPNIKSAAKRVEVTRKRTMRNTRIKSALKTTIRKFEEALKNASHDEARLKLRNAIRAIDKAVTKGVLHKNTASRKKSRLTKRFNKLTG.

Residues 69 to 88 (KNTASRKKSRLTKRFNKLTG) form a disordered region. Basic residues predominate over residues 71 to 88 (TASRKKSRLTKRFNKLTG).

Belongs to the bacterial ribosomal protein bS20 family.

Its function is as follows. Binds directly to 16S ribosomal RNA. This is Small ribosomal subunit protein bS20 from Pelotomaculum thermopropionicum (strain DSM 13744 / JCM 10971 / SI).